Reading from the N-terminus, the 417-residue chain is S-adenosylmethionine synthase (417 aa).

Residue histidine 16 participates in ATP binding. Aspartate 18 is a Mg(2+) binding site. Glutamate 44 is a binding site for K(+). Glutamate 57 and glutamine 100 together coordinate L-methionine. Residues 100 to 110 (QSPDIAQGVDT) are flexible loop. ATP-binding positions include 175 to 177 (DGK), 251 to 252 (KF), aspartate 260, 266 to 267 (RK), alanine 283, and lysine 287. Aspartate 260 lines the L-methionine pocket. Lysine 291 contacts L-methionine.

The protein belongs to the AdoMet synthase family. Homotetramer; dimer of dimers. Mg(2+) is required as a cofactor. The cofactor is K(+).

The protein localises to the cytoplasm. The enzyme catalyses L-methionine + ATP + H2O = S-adenosyl-L-methionine + phosphate + diphosphate. Its pathway is amino-acid biosynthesis; S-adenosyl-L-methionine biosynthesis; S-adenosyl-L-methionine from L-methionine: step 1/1. Functionally, catalyzes the formation of S-adenosylmethionine (AdoMet) from methionine and ATP. The overall synthetic reaction is composed of two sequential steps, AdoMet formation and the subsequent tripolyphosphate hydrolysis which occurs prior to release of AdoMet from the enzyme. The protein is S-adenosylmethionine synthase of Synechococcus elongatus (strain ATCC 33912 / PCC 7942 / FACHB-805) (Anacystis nidulans R2).